The following is a 182-amino-acid chain: Large ribosomal subunit protein uL6 (182 aa).

It belongs to the universal ribosomal protein uL6 family. As to quaternary structure, part of the 50S ribosomal subunit.

This protein binds to the 23S rRNA, and is important in its secondary structure. It is located near the subunit interface in the base of the L7/L12 stalk, and near the tRNA binding site of the peptidyltransferase center. The chain is Large ribosomal subunit protein uL6 from Methanococcus maripaludis (strain C7 / ATCC BAA-1331).